A 450-amino-acid polypeptide reads, in one-letter code: UPF0210 protein CPF_1748 (450 aa).

It belongs to the UPF0210 family. In terms of assembly, homodimer.

The sequence is that of UPF0210 protein CPF_1748 from Clostridium perfringens (strain ATCC 13124 / DSM 756 / JCM 1290 / NCIMB 6125 / NCTC 8237 / Type A).